A 400-amino-acid chain; its full sequence is 3-hydroxykynurenine transaminase (400 aa).

Positions 43–44 (SN) are binds to and confers specificity for 3-hydroxykynurenine; shared with dimeric partner. Pyridoxal 5'-phosphate is bound by residues 77–79 (SAH), S154, and Q204. Position 154 (S154) interacts with substrate. The residue at position 205 (K205) is an N6-(pyridoxal phosphate)lysine. Pyridoxal 5'-phosphate contacts are provided by Y256 and T259. R356 is a binding site for substrate.

The protein belongs to the class-V pyridoxal-phosphate-dependent aminotransferase family. In terms of assembly, homodimer. May form homotetramer. Pyridoxal 5'-phosphate is required as a cofactor.

Its subcellular location is the peroxisome. The enzyme catalyses glyoxylate + L-alanine = glycine + pyruvate. The catalysed reaction is L-kynurenine + glyoxylate = kynurenate + glycine + H2O. It catalyses the reaction 3-hydroxy-L-kynurenine + glyoxylate = xanthurenate + glycine + H2O. It carries out the reaction 3-hydroxy-L-kynurenine + pyruvate = xanthurenate + L-alanine + H2O. The enzyme catalyses L-kynurenine + pyruvate = kynurenate + L-alanine + H2O. The catalysed reaction is 2-oxobutanoate + L-alanine = (2S)-2-aminobutanoate + pyruvate. It catalyses the reaction L-phenylalanine + pyruvate = 3-phenylpyruvate + L-alanine. It carries out the reaction L-serine + pyruvate = 3-hydroxypyruvate + L-alanine. The enzyme catalyses L-cysteine + pyruvate = 2-oxo-3-sulfanylpropanoate + L-alanine. The catalysed reaction is 3-hydroxy-L-kynurenine + oxaloacetate = 4-(2-amino-3-hydroxyphenyl)-2,4-dioxobutanoate + L-aspartate. It catalyses the reaction 3-hydroxy-L-kynurenine + 3-phenylpyruvate = 4-(2-amino-3-hydroxyphenyl)-2,4-dioxobutanoate + L-phenylalanine. It carries out the reaction L-kynurenine + oxaloacetate = 4-(2-aminophenyl)-2,4-dioxobutanoate + L-aspartate. The enzyme catalyses 3-phenylpyruvate + L-kynurenine = 4-(2-aminophenyl)-2,4-dioxobutanoate + L-phenylalanine. Its pathway is amino-acid degradation; L-kynurenine degradation; kynurenate from L-kynurenine: step 1/2. Its function is as follows. Catalyzes the pyridoxal 5'-phosphate-dependent transamination of both 3-hydroxykynurenine and L-kynurenine to xanthurenic acid and kynurenic acid, respectively, preferentially using the alpha-ketoacid pyruvate, glyoxylate or oxaloacetate as the amino group acceptor. The affinity and catalytic efficiency for 3-hydroxykynurenine is higher than for L-kynurenine. Involved in the detoxification of cytotoxic metabolite 3-hydroxykynurenine generated by the hydroxylation of L-kynurenine, an intermediate in the tryptophan catabolism pathway. Also catalyzes, although with a lesser efficiency, the transamination of alanine with glyoxylate as an amino group acceptor. May play a role in the detoxification of glyoxylate, a toxic plant metabolite from the diet. The chain is 3-hydroxykynurenine transaminase from Aedes aegypti (Yellowfever mosquito).